The primary structure comprises 286 residues: Bifunctional protein FolD (286 aa).

NADP(+)-binding positions include 160–162, S189, and T230; that span reads GRS.

It belongs to the tetrahydrofolate dehydrogenase/cyclohydrolase family. As to quaternary structure, homodimer.

The enzyme catalyses (6R)-5,10-methylene-5,6,7,8-tetrahydrofolate + NADP(+) = (6R)-5,10-methenyltetrahydrofolate + NADPH. It carries out the reaction (6R)-5,10-methenyltetrahydrofolate + H2O = (6R)-10-formyltetrahydrofolate + H(+). The protein operates within one-carbon metabolism; tetrahydrofolate interconversion. In terms of biological role, catalyzes the oxidation of 5,10-methylenetetrahydrofolate to 5,10-methenyltetrahydrofolate and then the hydrolysis of 5,10-methenyltetrahydrofolate to 10-formyltetrahydrofolate. The chain is Bifunctional protein FolD from Chlamydia pneumoniae (Chlamydophila pneumoniae).